We begin with the raw amino-acid sequence, 294 residues long: 4-hydroxy-tetrahydrodipicolinate synthase (294 aa).

T45 lines the pyruvate pocket. Catalysis depends on Y133, which acts as the Proton donor/acceptor. K161 serves as the catalytic Schiff-base intermediate with substrate. I203 is a pyruvate binding site.

Belongs to the DapA family. In terms of assembly, homotetramer; dimer of dimers.

Its subcellular location is the cytoplasm. The enzyme catalyses L-aspartate 4-semialdehyde + pyruvate = (2S,4S)-4-hydroxy-2,3,4,5-tetrahydrodipicolinate + H2O + H(+). The protein operates within amino-acid biosynthesis; L-lysine biosynthesis via DAP pathway; (S)-tetrahydrodipicolinate from L-aspartate: step 3/4. In terms of biological role, catalyzes the condensation of (S)-aspartate-beta-semialdehyde [(S)-ASA] and pyruvate to 4-hydroxy-tetrahydrodipicolinate (HTPA). The polypeptide is 4-hydroxy-tetrahydrodipicolinate synthase (Shewanella sp. (strain ANA-3)).